Reading from the N-terminus, the 471-residue chain is Trimethyllysine dioxygenase (471 aa).

His-251 and Asp-253 together coordinate Fe cation. Positions 272 to 302 are disordered; sequence KAAPSRPPPPPPPPPPPSEEKEAAGSAAGEA. Residues 276–288 show a composition bias toward pro residues; the sequence is SRPPPPPPPPPPP. His-430 is a Fe cation binding site.

The protein belongs to the gamma-BBH/TMLD family. Requires Fe(2+) as cofactor. L-ascorbate is required as a cofactor.

The protein resides in the cytoplasm. It catalyses the reaction N(6),N(6),N(6)-trimethyl-L-lysine + 2-oxoglutarate + O2 = (3S)-3-hydroxy-N(6),N(6),N(6)-trimethyl-L-lysine + succinate + CO2. The protein operates within amine and polyamine biosynthesis; carnitine biosynthesis. Converts trimethyllysine (TML) into hydroxytrimethyllysine (HTML). In Neurospora crassa (strain ATCC 24698 / 74-OR23-1A / CBS 708.71 / DSM 1257 / FGSC 987), this protein is Trimethyllysine dioxygenase (cbs-1).